The following is an 83-amino-acid chain: Three-finger toxin W-IV (83 aa).

The first 21 residues, 1–21, serve as a signal peptide directing secretion; that stretch reads MKTLLLTLVVVTIVCLDLGHT. Intrachain disulfides connect C24–C45, C38–C62, C64–C75, and C76–C81.

Belongs to the three-finger toxin family. Short-chain subfamily. Type I alpha-neurotoxin sub-subfamily. In terms of tissue distribution, expressed by the venom gland.

It is found in the secreted. Binds to muscle nicotinic acetylcholine receptor (nAChR) and inhibit acetylcholine from binding to the receptor, thereby impairing neuromuscular transmission. The protein is Three-finger toxin W-IV of Walterinnesia aegyptia (Desert black snake).